The following is a 605-amino-acid chain: Cystathionine gamma-synthase-like enzyme iboG1 (605 aa).

Tyr289 is a binding site for substrate. Lys393 is modified (N6-(pyridoxal phosphate)lysine).

Belongs to the trans-sulfuration enzymes family. The cofactor is pyridoxal 5'-phosphate.

Its pathway is secondary metabolite biosynthesis. In terms of biological role, cystathionine gamma-synthase-like enzyme; part of the gene cluster that mediates the biosynthesis of the psychoactive metabolites ibotenic acid and muscimol. The first committed step is glutamate hydroxylation by the 2-oxoglutarate-dependent dioxygenase iboH, and the last step is decarboxylation of ibotenic acid to muscimol by the decarboxylase iboD. The order of the intermediate reactions is somewhat ambiguous. IboA likely activates the carboxylic acid at position 5 to introduce an amide bond, and the flavin monooxygenase iboF generates the N-O bond. There are several options for the latter step. One option is that iboF directly hydroxylates the amide nitrogen formed by iboA to produce a hydroxamic acid species. Another option is that iboF hydroxylates an external N-containing compound, whose resulting N-O bond is subsequently introduced into the hydroxyglutamate scaffold. The paralogous PLP-dependent cystathionine gamma-synthase-like enzymes iboG1 and iboG2 are likely involved in substitution of the OH group at position 3 by the O-N moiety. The first cyclic intermediate is most probably tricholomic acid which is likely desaturated to ibotenic acid by the cytochrome P450 monooxygenase iboC. This Amanita muscaria (strain Koide BX008) protein is Cystathionine gamma-synthase-like enzyme iboG1 (iboG1).